The following is a 365-amino-acid chain: UDP-N-acetylglucosamine--N-acetylmuramyl-(pentapeptide) pyrophosphoryl-undecaprenol N-acetylglucosamine transferase (365 aa).

UDP-N-acetyl-alpha-D-glucosamine-binding positions include 12–14 (TGG), N128, R169, S195, and Q296.

This sequence belongs to the glycosyltransferase 28 family. MurG subfamily.

The protein localises to the cell inner membrane. The catalysed reaction is di-trans,octa-cis-undecaprenyl diphospho-N-acetyl-alpha-D-muramoyl-L-alanyl-D-glutamyl-meso-2,6-diaminopimeloyl-D-alanyl-D-alanine + UDP-N-acetyl-alpha-D-glucosamine = di-trans,octa-cis-undecaprenyl diphospho-[N-acetyl-alpha-D-glucosaminyl-(1-&gt;4)]-N-acetyl-alpha-D-muramoyl-L-alanyl-D-glutamyl-meso-2,6-diaminopimeloyl-D-alanyl-D-alanine + UDP + H(+). The protein operates within cell wall biogenesis; peptidoglycan biosynthesis. Cell wall formation. Catalyzes the transfer of a GlcNAc subunit on undecaprenyl-pyrophosphoryl-MurNAc-pentapeptide (lipid intermediate I) to form undecaprenyl-pyrophosphoryl-MurNAc-(pentapeptide)GlcNAc (lipid intermediate II). This is UDP-N-acetylglucosamine--N-acetylmuramyl-(pentapeptide) pyrophosphoryl-undecaprenol N-acetylglucosamine transferase from Gluconobacter oxydans (strain 621H) (Gluconobacter suboxydans).